The primary structure comprises 568 residues: General O-oligosaccharyltransferase (568 aa).

Helical transmembrane passes span 17 to 37, 46 to 66, 78 to 98, 101 to 121, 132 to 152, 176 to 196, 214 to 234, 251 to 271, 349 to 369, 376 to 396, 397 to 417, and 429 to 449; these read VAVM…LAWL, LTFA…ALFL, LALP…VVDF, ALLS…GYNL, FTLS…IACI, FAQP…CLYL, IVFA…LFFI, YAVL…PRFT, LLVW…LIWI, AKTT…IHTL, LEYP…MGLI, and VPVS…ALIW.

This sequence belongs to the PglL O-oligosaccharyltransferase family.

Its subcellular location is the cell membrane. Catalyzes the O-glycosylation of multiple protein targets. Is responsible for general protein glycosylation within A.baylyi ADP1. Does not act as an O-antigen ligase. The protein is General O-oligosaccharyltransferase of Acinetobacter baylyi (strain ATCC 33305 / BD413 / ADP1).